The sequence spans 240 residues: UDP-2,3-diacylglucosamine hydrolase (240 aa).

5 residues coordinate Mn(2+): Asp8, His10, Asp41, Asn79, and His114. Residue Asn79 to Arg80 coordinates substrate. Substrate contacts are provided by Asp122, Ser160, Asn164, Lys167, and His195. Mn(2+)-binding residues include His195 and His197.

This sequence belongs to the LpxH family. Mn(2+) is required as a cofactor.

It localises to the cell inner membrane. The enzyme catalyses UDP-2-N,3-O-bis[(3R)-3-hydroxytetradecanoyl]-alpha-D-glucosamine + H2O = 2-N,3-O-bis[(3R)-3-hydroxytetradecanoyl]-alpha-D-glucosaminyl 1-phosphate + UMP + 2 H(+). Its pathway is glycolipid biosynthesis; lipid IV(A) biosynthesis; lipid IV(A) from (3R)-3-hydroxytetradecanoyl-[acyl-carrier-protein] and UDP-N-acetyl-alpha-D-glucosamine: step 4/6. In terms of biological role, hydrolyzes the pyrophosphate bond of UDP-2,3-diacylglucosamine to yield 2,3-diacylglucosamine 1-phosphate (lipid X) and UMP by catalyzing the attack of water at the alpha-P atom. Involved in the biosynthesis of lipid A, a phosphorylated glycolipid that anchors the lipopolysaccharide to the outer membrane of the cell. The polypeptide is UDP-2,3-diacylglucosamine hydrolase (Salmonella paratyphi A (strain ATCC 9150 / SARB42)).